Consider the following 157-residue polypeptide: NADPH-dependent 7-cyano-7-deazaguanine reductase (157 aa).

Cys-56 (thioimide intermediate) is an active-site residue. Asp-63 serves as the catalytic Proton donor. Substrate contacts are provided by residues 78-80 (VES) and 97-98 (HE).

It belongs to the GTP cyclohydrolase I family. QueF type 1 subfamily.

The protein localises to the cytoplasm. The enzyme catalyses 7-aminomethyl-7-carbaguanine + 2 NADP(+) = 7-cyano-7-deazaguanine + 2 NADPH + 3 H(+). Its pathway is tRNA modification; tRNA-queuosine biosynthesis. Functionally, catalyzes the NADPH-dependent reduction of 7-cyano-7-deazaguanine (preQ0) to 7-aminomethyl-7-deazaguanine (preQ1). This is NADPH-dependent 7-cyano-7-deazaguanine reductase from Parabacteroides distasonis (strain ATCC 8503 / DSM 20701 / CIP 104284 / JCM 5825 / NCTC 11152).